The sequence spans 68 residues: Large ribosomal subunit protein uL29 (68 aa).

Belongs to the universal ribosomal protein uL29 family.

The chain is Large ribosomal subunit protein uL29 from Bradyrhizobium sp. (strain BTAi1 / ATCC BAA-1182).